A 364-amino-acid polypeptide reads, in one-letter code: Mitogen-activated protein kinase 11 (364 aa).

The region spanning 24–308 (LQGLRPVGSG…AAEALAHAYF (285 aa)) is the Protein kinase domain. ATP contacts are provided by residues 30–38 (VGSGAYGSV) and Lys-53. Residue Glu-71 coordinates nilotinib. Residue Asp-168 is the Proton acceptor of the active site. Thr-180 is modified (phosphothreonine; by MAP2K3, MAP2K4 and MAP2K6). The TXY motif lies at 180 to 182 (TGY). At Tyr-182 the chain carries Phosphotyrosine; by MAP2K3, MAP2K4 and MAP2K6. The segment at 312–331 (HDPDDEPEAEPYDESVEAKE) is disordered. Positions 314–326 (PDDEPEAEPYDES) are enriched in acidic residues. Phosphotyrosine; by ZAP70 is present on Tyr-323.

The protein belongs to the protein kinase superfamily. CMGC Ser/Thr protein kinase family. MAP kinase subfamily. In terms of assembly, interacts with HDAC3 and DUSP16. It depends on Mg(2+) as a cofactor. In terms of processing, dually phosphorylated on Thr-180 and Tyr-182 by MAP2K3/MKK3, MAP2K4/MKK4 and MAP2K6/MKK6, which activates the enzyme.

It localises to the cytoplasm. It is found in the nucleus. It carries out the reaction L-seryl-[protein] + ATP = O-phospho-L-seryl-[protein] + ADP + H(+). The catalysed reaction is L-threonyl-[protein] + ATP = O-phospho-L-threonyl-[protein] + ADP + H(+). Its activity is regulated as follows. Activated by phosphorylation on threonine and tyrosine by MAP2K3/MKK3, MAP2K4/MKK4 and MAP2K6/MKK6. MAP2K3/MKK3 and MAP2K6/MKK6 are both essential for the activation of MAPK11 induced by environmental stress. HDAC3 interacts directly and selectively with MAPK11 to repress ATF2 transcriptional activity, and regulate TNF gene expression in LPS-stimulated cells. Inhibited by SB203580 and pyridinyl-imidazole related compounds. Its function is as follows. Serine/threonine kinase which acts as an essential component of the MAP kinase signal transduction pathway. MAPK11 is one of the four p38 MAPKs which play an important role in the cascades of cellular responses evoked by extracellular stimuli such as pro-inflammatory cytokines or physical stress leading to direct activation of transcription factors. Accordingly, p38 MAPKs phosphorylate a broad range of proteins and it has been estimated that they may have approximately 200 to 300 substrates each. MAPK11 functions are mostly redundant with those of MAPK14. Some of the targets are downstream kinases which are activated through phosphorylation and further phosphorylate additional targets. RPS6KA5/MSK1 and RPS6KA4/MSK2 can directly phosphorylate and activate transcription factors such as CREB1, ATF1, the NF-kappa-B isoform RELA/NFKB3, STAT1 and STAT3, but can also phosphorylate histone H3 and the nucleosomal protein HMGN1. RPS6KA5/MSK1 and RPS6KA4/MSK2 play important roles in the rapid induction of immediate-early genes in response to stress or mitogenic stimuli, either by inducing chromatin remodeling or by recruiting the transcription machinery. On the other hand, two other kinase targets, MAPKAPK2/MK2 and MAPKAPK3/MK3, participate in the control of gene expression mostly at the post-transcriptional level, by phosphorylating ZFP36 (tristetraprolin) and ELAVL1, and by regulating EEF2K, which is important for the elongation of mRNA during translation. MKNK1/MNK1 and MKNK2/MNK2, two other kinases activated by p38 MAPKs, regulate protein synthesis by phosphorylating the initiation factor EIF4E2. In the cytoplasm, the p38 MAPK pathway is an important regulator of protein turnover. For example, CFLAR is an inhibitor of TNF-induced apoptosis whose proteasome-mediated degradation is regulated by p38 MAPK phosphorylation. Ectodomain shedding of transmembrane proteins is regulated by p38 MAPKs as well. In response to inflammatory stimuli, p38 MAPKs phosphorylate the membrane-associated metalloprotease ADAM17. Such phosphorylation is required for ADAM17-mediated ectodomain shedding of TGF-alpha family ligands, which results in the activation of EGFR signaling and cell proliferation. Additional examples of p38 MAPK substrates are the FGFR1. FGFR1 can be translocated from the extracellular space into the cytosol and nucleus of target cells, and regulates processes such as rRNA synthesis and cell growth. FGFR1 translocation requires p38 MAPK activation. In the nucleus, many transcription factors are phosphorylated and activated by p38 MAPKs in response to different stimuli. Classical examples include ATF1, ATF2, ATF6, ELK1, PTPRH, DDIT3, TP53/p53 and MEF2C and MEF2A. The p38 MAPKs are emerging as important modulators of gene expression by regulating chromatin modifiers and remodelers. The promoters of several genes involved in the inflammatory response, such as IL6, IL8 and IL12B, display a p38 MAPK-dependent enrichment of histone H3 phosphorylation on 'Ser-10' (H3S10ph) in LPS-stimulated myeloid cells. This phosphorylation enhances the accessibility of the cryptic NF-kappa-B-binding sites marking promoters for increased NF-kappa-B recruitment. Phosphorylates methyltransferase DOT1L on 'Ser-834', 'Thr-900', 'Ser-902', 'Thr-984', 'Ser-1001', 'Ser-1009' and 'Ser-1104'. The sequence is that of Mitogen-activated protein kinase 11 (Mapk11) from Mus musculus (Mouse).